Consider the following 64-residue polypeptide: Large ribosomal subunit protein bL33c (64 aa).

It belongs to the bacterial ribosomal protein bL33 family.

Its subcellular location is the plastid. It localises to the chloroplast. The sequence is that of Large ribosomal subunit protein bL33c (rpl33) from Mesostigma viride (Green alga).